The following is a 287-amino-acid chain: Large ribosomal subunit protein uL3 (287 aa).

The segment at 228-287 (KAPEAKPAKLSKKKQAKELAKAQAANQQTVEAKVDTPVVEPKPTEVKKAAPVVEKKGEDK) is disordered. The span at 269-287 (KPTEVKKAAPVVEKKGEDK) shows a compositional bias: basic and acidic residues.

This sequence belongs to the universal ribosomal protein uL3 family. In terms of assembly, part of the 50S ribosomal subunit. Forms a cluster with proteins L14 and L19.

One of the primary rRNA binding proteins, it binds directly near the 3'-end of the 23S rRNA, where it nucleates assembly of the 50S subunit. This Mycoplasma pneumoniae (strain ATCC 29342 / M129 / Subtype 1) (Mycoplasmoides pneumoniae) protein is Large ribosomal subunit protein uL3.